Reading from the N-terminus, the 626-residue chain is Miltiradiene synthase KSL1, chloroplastic (626 aa).

The transit peptide at 1–51 (MSLAFNLRVIPFSGHTIQSRRGLFPVHESPMITTKPFAAVKCSLTTSTDLM) directs the protein to the chloroplast. Positions 329, 333, 473, and 481 each coordinate Mg(2+). Residues 329–333 (DDFFD) carry the DDXXD motif motif.

The protein belongs to the terpene synthase family. Requires Mg(2+) as cofactor. In terms of tissue distribution, highly expressed in roots, and, at low levels, in stems and leaves.

The protein resides in the plastid. It is found in the chloroplast. The enzyme catalyses (+)-copalyl diphosphate = miltiradiene + diphosphate. It functions in the pathway secondary metabolite biosynthesis; terpenoid biosynthesis. Its function is as follows. Involved in the biosynthesis of ent-kaurene diterpenoids natural products such as oridonin, miltiradiene, eriocalyxin B and nezukol, known to exhibit antitumor, anti-inflammatory and antibacterial activities. Catalyzes the conversion of (+)-copalyl diphosphate ((+)-CPP) to miltiradiene. The sequence is that of Miltiradiene synthase KSL1, chloroplastic from Isodon rubescens (Rabdosia rubescens).